The sequence spans 769 residues: Ligand-dependent nuclear receptor-interacting factor 1 (769 aa).

Residues lysine 259 and lysine 279 each participate in a glycyl lysine isopeptide (Lys-Gly) (interchain with G-Cter in SUMO2) cross-link. Positions 378 to 387 (QIDQQNSVSP) are enriched in polar residues. The disordered stretch occupies residues 378 to 400 (QIDQQNSVSPDTPVRKDTLQTVS). 3 positions are modified to phosphoserine: serine 402, serine 430, and serine 436. A Glycyl lysine isopeptide (Lys-Gly) (interchain with G-Cter in SUMO2) cross-link involves residue lysine 446. Serine 502 is modified (phosphoserine). The tract at residues 528–562 (DQEPKIHNEMASTSDKGAQGRNDKKDSQGRSNKAL) is disordered. Positions 580-584 (LRVCL) match the PxVxL motif motif. Serine 599 carries the post-translational modification Phosphoserine. A Glycyl lysine isopeptide (Lys-Gly) (interchain with G-Cter in SUMO2) cross-link involves residue lysine 605. 2 short sequence motifs (nuclear localization signal) span residues 628 to 631 (KKRK) and 642 to 645 (KKRK). Residue lysine 702 forms a Glycyl lysine isopeptide (Lys-Gly) (interchain with G-Cter in SUMO2) linkage. Threonine 732 is modified (phosphothreonine). Positions 740–769 (IRDEKIRRLKQVLREKEAALEEMRKKMHQK) form a coiled coil.

Belongs to the LRIF1 family. As to quaternary structure, interacts with RARA. Interacts with SMCHD1; leading to recruitment to inactivated chromosome X in females. Interacts (via PxVxL motif) with HP1 (CBX1/HP1-beta, CBX3/HP1-gamma and CBX5/HP1-alpha). As to expression, widely expressed, with the highest expression levels in heart, liver and placenta.

It localises to the chromosome. The protein localises to the nucleus matrix. In terms of biological role, together with SMCHD1, involved in chromosome X inactivation in females by promoting the compaction of heterochromatin. Also able to repress the ligand-induced transcriptional activity of retinoic acid receptor alpha (RARA), possibly through direct recruitment of histone deacetylases. Also required for silencing of the DUX4 locus in somatic cells. The sequence is that of Ligand-dependent nuclear receptor-interacting factor 1 from Homo sapiens (Human).